The chain runs to 115 residues: Large ribosomal subunit protein bL20 (115 aa).

This sequence belongs to the bacterial ribosomal protein bL20 family.

In terms of biological role, binds directly to 23S ribosomal RNA and is necessary for the in vitro assembly process of the 50S ribosomal subunit. It is not involved in the protein synthesizing functions of that subunit. In Synechococcus sp. (strain WH7803), this protein is Large ribosomal subunit protein bL20.